The chain runs to 379 residues: DNA (cytosine-5)-methyltransferase (379 aa).

The SAM-dependent MTase C5-type domain occupies 4 to 366; that stretch reads LRVLEFYSGI…KVLVSPNEEE (363 aa). The active site involves C78. Residues 178–192 are compositionally biased toward basic and acidic residues; it reads KKEQDKHNEKVDENK. The tract at residues 178-205 is disordered; the sequence is KKEQDKHNEKVDENKLNNNSNNNNEQNK. Residues 193-203 show a composition bias toward low complexity; that stretch reads LNNNSNNNNEQ.

The protein belongs to the class I-like SAM-binding methyltransferase superfamily. C5-methyltransferase family.

Its subcellular location is the nucleus. The enzyme catalyses a 2'-deoxycytidine in DNA + S-adenosyl-L-methionine = a 5-methyl-2'-deoxycytidine in DNA + S-adenosyl-L-homocysteine + H(+). In terms of biological role, involved in epigenetic gene silencing. Methylates specific cytosine residues in the retrotransposons DIRS-1 and Skipper. The polypeptide is DNA (cytosine-5)-methyltransferase (dnmA) (Dictyostelium discoideum (Social amoeba)).